Here is a 517-residue protein sequence, read N- to C-terminus: Putative pumilio homolog 21 (517 aa).

Disordered stretches follow at residues 33–57, 69–94, 107–130, and 175–201; these read NHQE…PPLL, KNNQ…PPLV, NHQE…PLLT, and FTPS…PPLS. Residues 42 to 51 are compositionally biased toward low complexity; that stretch reads NTNINSNNNH. Over residues 69-84 the composition is skewed to polar residues; it reads KNNQEPGESGNTTINR. The PUM-HD domain maps to 148-502; it reads ESSNNNYPNL…NTLRVIQEEI (355 aa). The span at 177-190 shows a compositional bias: polar residues; the sequence is PSSLTQPDDSSSRY. One copy of the Pumilio 1; degenerate repeat lies at 258–293; the sequence is TTKRIFLHLATNQYGSQALRILFRRSPSLDHLLFCA. The Pumilio 2 repeat unit spans residues 294–328; the sequence is VDTNFFLLMSDKYGRGLIIPAIRAVDKTKKESLYK. Residues 329–363 form a Pumilio 3; degenerate repeat; sequence LTYEYTLHLARLETGCLALNNVLQEIRGIYRDLIF. 3 Pumilio repeats span residues 364-400, 401-437, and 438-473; these read ECVA…AIAE, RLRG…EEFR, and GNAK…PLLR.

It localises to the cytoplasm. Sequence-specific RNA-binding protein that regulates translation and mRNA stability by binding the 3'-UTR of target mRNAs. This is Putative pumilio homolog 21 (APUM21) from Arabidopsis thaliana (Mouse-ear cress).